The primary structure comprises 70 residues: ATP synthase subunit c (70 aa).

The next 2 membrane-spanning stretches (helical) occupy residues Ala5–Val25 and Phe47–Val67.

It belongs to the ATPase C chain family. In terms of assembly, F-type ATPases have 2 components, F(1) - the catalytic core - and F(0) - the membrane proton channel. F(1) has five subunits: alpha(3), beta(3), gamma(1), delta(1), epsilon(1). F(0) has three main subunits: a(1), b(2) and c(10-14). The alpha and beta chains form an alternating ring which encloses part of the gamma chain. F(1) is attached to F(0) by a central stalk formed by the gamma and epsilon chains, while a peripheral stalk is formed by the delta and b chains.

The protein localises to the cell membrane. Its function is as follows. F(1)F(0) ATP synthase produces ATP from ADP in the presence of a proton or sodium gradient. F-type ATPases consist of two structural domains, F(1) containing the extramembraneous catalytic core and F(0) containing the membrane proton channel, linked together by a central stalk and a peripheral stalk. During catalysis, ATP synthesis in the catalytic domain of F(1) is coupled via a rotary mechanism of the central stalk subunits to proton translocation. Key component of the F(0) channel; it plays a direct role in translocation across the membrane. A homomeric c-ring of between 10-14 subunits forms the central stalk rotor element with the F(1) delta and epsilon subunits. The protein is ATP synthase subunit c of Anoxybacillus flavithermus (strain DSM 21510 / WK1).